An 82-amino-acid polypeptide reads, in one-letter code: Sec-independent protein translocase protein TatA (82 aa).

Residues 1-21 form a helical membrane-spanning segment; the sequence is MGLSTTHLIIFLVIIVLIFGT.

The protein belongs to the TatA/E family. As to quaternary structure, the Tat system comprises two distinct complexes: a TatABC complex, containing multiple copies of TatA, TatB and TatC subunits, and a separate TatA complex, containing only TatA subunits. Substrates initially bind to the TatABC complex, which probably triggers association of the separate TatA complex to form the active translocon.

It is found in the cell inner membrane. Part of the twin-arginine translocation (Tat) system that transports large folded proteins containing a characteristic twin-arginine motif in their signal peptide across membranes. TatA could form the protein-conducting channel of the Tat system. The protein is Sec-independent protein translocase protein TatA of Leptothrix cholodnii (strain ATCC 51168 / LMG 8142 / SP-6) (Leptothrix discophora (strain SP-6)).